Reading from the N-terminus, the 179-residue chain is ATP synthase subunit b (179 aa).

A helical transmembrane segment spans residues 13 to 33; sequence IHIDELVFGLIAFAVIFALVY.

It belongs to the ATPase B chain family. In terms of assembly, F-type ATPases have 2 components, F(1) - the catalytic core - and F(0) - the membrane proton channel. F(1) has five subunits: alpha(3), beta(3), gamma(1), delta(1), epsilon(1). F(0) has three main subunits: a(1), b(2) and c(10-14). The alpha and beta chains form an alternating ring which encloses part of the gamma chain. F(1) is attached to F(0) by a central stalk formed by the gamma and epsilon chains, while a peripheral stalk is formed by the delta and b chains.

The protein localises to the cell membrane. In terms of biological role, f(1)F(0) ATP synthase produces ATP from ADP in the presence of a proton or sodium gradient. F-type ATPases consist of two structural domains, F(1) containing the extramembraneous catalytic core and F(0) containing the membrane proton channel, linked together by a central stalk and a peripheral stalk. During catalysis, ATP synthesis in the catalytic domain of F(1) is coupled via a rotary mechanism of the central stalk subunits to proton translocation. Functionally, component of the F(0) channel, it forms part of the peripheral stalk, linking F(1) to F(0). This is ATP synthase subunit b from Thermobifida fusca (strain YX).